The chain runs to 972 residues: 116 kDa U5 small nuclear ribonucleoprotein component (972 aa).

At M1 the chain carries N-acetylmethionine. Positions 1 to 53 (MDTDLYDEFGNYIGPELDSDEDDDELGRETKDLDEVDEDEDDDDVGDHDEDHP) are disordered. Acidic residues-rich tracts occupy residues 17-26 (LDSDEDDDEL) and 34-48 (DEVD…VGDH). At S19 the chain carries Phosphoserine. K64 is covalently cross-linked (Glycyl lysine isopeptide (Lys-Gly) (interchain with G-Cter in SUMO1); alternate). K64 is covalently cross-linked (Glycyl lysine isopeptide (Lys-Gly) (interchain with G-Cter in SUMO2); alternate). T86 is subject to Phosphothreonine. In terms of domain architecture, tr-type G spans 127 to 409 (ELIRNVTLCG…GIHLTKEELK (283 aa)). GTP contacts are provided by residues 136-143 (GHLHHGKT), 204-208 (DTPGH), and 258-261 (NKID).

It belongs to the TRAFAC class translation factor GTPase superfamily. Classic translation factor GTPase family. EF-G/EF-2 subfamily. As to quaternary structure, component of the U5 snRNP and the U4/U6-U5 tri-snRNP complex, a building block of the spliceosome. The U4/U6-U5 tri-snRNP complex is composed of the U4, U6 and U5 snRNAs and at least PRPF3, PRPF4, PRPF6, PRPF8, PRPF31, SNRNP200, TXNL4A, SNRNP40, DDX23, CD2BP2, PPIH, SNU13, EFTUD2, SART1 and USP39. Component of the pre-catalytic, catalytic and post-catalytic spliceosome complexes. Component of the minor spliceosome, which splices U12-type introns. Within this complex, interacts with CRIPT. Interacts with ERBB4 and PRPF8. Interacts with PIH1D1. Interacts with RPAP3 and URI1 in a ZNHIT2-dependent manner. Interacts with NRDE2. Interacts with FAM50A. Interacts with UBL5.

The protein resides in the nucleus. In terms of biological role, required for pre-mRNA splicing as component of the spliceosome, including pre-catalytic, catalytic and post-catalytic spliceosomal complexes. Component of the U5 snRNP and the U4/U6-U5 tri-snRNP complex, a building block of the spliceosome. As a component of the minor spliceosome, involved in the splicing of U12-type introns in pre-mRNAs. The chain is 116 kDa U5 small nuclear ribonucleoprotein component (EFTUD2) from Bos taurus (Bovine).